The following is an 874-amino-acid chain: Alanine--tRNA ligase (874 aa).

The Zn(2+) site is built by His-564, His-568, Cys-665, and His-669.

This sequence belongs to the class-II aminoacyl-tRNA synthetase family. Zn(2+) serves as cofactor.

The protein resides in the cytoplasm. It carries out the reaction tRNA(Ala) + L-alanine + ATP = L-alanyl-tRNA(Ala) + AMP + diphosphate. Catalyzes the attachment of alanine to tRNA(Ala) in a two-step reaction: alanine is first activated by ATP to form Ala-AMP and then transferred to the acceptor end of tRNA(Ala). Also edits incorrectly charged Ser-tRNA(Ala) and Gly-tRNA(Ala) via its editing domain. The protein is Alanine--tRNA ligase of Burkholderia pseudomallei (strain 1106a).